The following is a 318-amino-acid chain: Pantothenate kinase (318 aa).

96–103 (GSVAVGKS) serves as a coordination point for ATP.

This sequence belongs to the prokaryotic pantothenate kinase family.

The protein localises to the cytoplasm. The enzyme catalyses (R)-pantothenate + ATP = (R)-4'-phosphopantothenate + ADP + H(+). The protein operates within cofactor biosynthesis; coenzyme A biosynthesis; CoA from (R)-pantothenate: step 1/5. This chain is Pantothenate kinase, found in Bradyrhizobium diazoefficiens (strain JCM 10833 / BCRC 13528 / IAM 13628 / NBRC 14792 / USDA 110).